The chain runs to 153 residues: UPF0540 protein At1g62220 (153 aa).

The first 21 residues, 1–21 (MNATKFVVLLVISVLCAIVTA), serve as a signal peptide directing secretion. 2 disordered regions span residues 63–82 (SSAT…YENG) and 122–153 (ARAN…GKKD). Over residues 122–132 (ARANGKVASAS) the composition is skewed to low complexity. Over residues 141–153 (KKGKGKKGKGKKD) the composition is skewed to basic residues.

This sequence belongs to the UPF0540 family.

This is UPF0540 protein At1g62220 from Arabidopsis thaliana (Mouse-ear cress).